Consider the following 398-residue polypeptide: Phosphoglycerate kinase (398 aa).

Substrate-binding positions include 21-23, arginine 36, 59-62, arginine 119, and arginine 157; these read DFN and HLGR. Residues lysine 208, glycine 296, glutamate 327, and 354 to 357 each bind ATP; that span reads GGDS.

This sequence belongs to the phosphoglycerate kinase family. In terms of assembly, monomer.

The protein resides in the cytoplasm. The catalysed reaction is (2R)-3-phosphoglycerate + ATP = (2R)-3-phospho-glyceroyl phosphate + ADP. It participates in carbohydrate degradation; glycolysis; pyruvate from D-glyceraldehyde 3-phosphate: step 2/5. The chain is Phosphoglycerate kinase from Streptococcus equi subsp. zooepidemicus (strain MGCS10565).